The following is a 501-amino-acid chain: DEAD-box ATP-dependent RNA helicase 20 (501 aa).

Basic and acidic residues-rich tracts occupy residues 1 to 20 (MSRY…RRSD) and 38 to 53 (SKKD…KLDL). The disordered stretch occupies residues 1-53 (MSRYDSRTGDSTSYRDRRSDSGFGGTSSYGSSGSHTSSKKDNDGNESPRKLDL). Positions 99–127 (KSFRDVGFPDYVLEEVKKAGFTEPTPIQS) match the Q motif motif. The Helicase ATP-binding domain occupies 130–305 (WPMAMKGRDL…KKFLYNPYKV (176 aa)). 143 to 150 (AETGSGKT) serves as a coordination point for ATP. The short motif at 253–256 (DEAD) is the DEAD box element. A Helicase C-terminal domain is found at 333 to 478 (KLVKLLEDIM…KVSPELASMG (146 aa)). Residues 473–501 (ELASMGRSTAPPPPGLGGFRDRGSRRGWS) form a disordered region. The segment covering 491–501 (FRDRGSRRGWS) has biased composition (basic and acidic residues).

Belongs to the DEAD box helicase family. DDX5/DBP2 subfamily.

Its subcellular location is the nucleus. It catalyses the reaction ATP + H2O = ADP + phosphate + H(+). In terms of biological role, ATP-dependent RNA helicase involved nonsense-mediated mRNA decay and ribosome biogenesis through rRNA processing. The protein is DEAD-box ATP-dependent RNA helicase 20 (RH20) of Arabidopsis thaliana (Mouse-ear cress).